A 418-amino-acid chain; its full sequence is Protein-lysine 6-oxidase (418 aa).

Residues 1 to 20 (MRFAWTALLGSLQLCALVRC) form the signal peptide. The propeptide at 21 to 169 (APPAASHRQP…NRVEVDGMVG (149 aa)) is removed by BMP1. The interval 63–84 (YQPQRRRDPGATAPGAANATAP) is disordered. A compositionally biased stretch (low complexity) spans 72–84 (GATAPGAANATAP). N-linked (GlcNAc...) asparagine glycans are attached at residues Asn80, Asn96, and Asn143. The segment at 130–175 (TSGAHDAGTSRADNQTAPGEVPTLSNLRPPNRVEVDGMVGDDPYNP) is disordered. Residues 140-157 (RADNQTAPGEVPTLSNLR) are compositionally biased toward polar residues. Tyr188 is subject to Sulfotyrosine. The segment at 214 to 418 (PDLVPDPYYI…YASGCTISPY (205 aa)) is lysyl-oxidase like. 5 cysteine pairs are disulfide-bonded: Cys239/Cys245, Cys292/Cys341, Cys325/Cys331, Cys352/Cys362, and Cys399/Cys413. Positions 293, 295, and 297 each coordinate Cu cation. Residues 321-356 (KASFCLEDTSCDYGYHRRFACTAHTQGLSPGCYDTY) constitute a cross-link (lysine tyrosylquinone (Lys-Tyr)). Tyr356 bears the 2',4',5'-topaquinone mark.

This sequence belongs to the lysyl oxidase family. Interacts with MFAP4. Interacts (via propeptide) with EFEMP2; this interaction is strong and facilitates formation of ternary complexes with ELN during elastic fiber assembly; this interaction limits interaction of EFEMP2 with FBLN5. The cofactor is Cu cation. Lysine tyrosylquinone residue serves as cofactor. In terms of processing, the lysine tyrosylquinone cross-link (LTQ) is generated by condensation of the epsilon-amino group of a lysine with a topaquinone produced by oxidation of tyrosine. Proteolytically cleaved by BMP1 which removes the propeptide. Also proteolytically cleaved by ADAMTS2 and ADAMTS14, but not by ADAMTS3, at an additional cleavage site downstream of the BMP1 cleavage site. The propeptide plays a role in directing the deposition of this enzyme to elastic fibers, via interaction with tropoelastin. Cleavage by BMP1 to remove the propeptide does not increase enzymatic activity but increases binding to collagen. Cleavage by ADAMTS2 produces a form with reduced collagen-binding activity. Post-translationally, sulfated at Tyr-188 and also at either Tyr-184 or Tyr-185 which enhances binding to collagen.

It is found in the secreted. The protein resides in the extracellular space. It catalyses the reaction L-lysyl-[protein] + O2 + H2O = (S)-2-amino-6-oxohexanoyl-[protein] + H2O2 + NH4(+). Functionally, responsible for the post-translational oxidative deamination of peptidyl lysine residues in precursors to fibrous collagen and elastin. Regulator of Ras expression. May play a role in tumor suppression. Plays a role in the aortic wall architecture. The chain is Protein-lysine 6-oxidase from Bos taurus (Bovine).